Consider the following 516-residue polypeptide: uncharacterized protein (516 aa).

S21 bears the Phosphoserine mark. The disordered stretch occupies residues D46–T74. Polar residues predominate over residues L47 to E62. 6 WD repeats span residues T182–P227, Y252–S292, Y295–S335, Q337–W377, A381–V421, and L426–K468. A compositionally biased stretch (basic and acidic residues) spans E482–G493. The segment at E482–S516 is disordered. The segment covering D495–S516 has biased composition (acidic residues). A phosphoserine mark is found at S496 and S497.

The protein resides in the cytoplasm. Its subcellular location is the nucleus. It localises to the nucleolus. This is an uncharacterized protein from Schizosaccharomyces pombe (strain 972 / ATCC 24843) (Fission yeast).